Consider the following 495-residue polypeptide: Cornulin (495 aa).

One can recognise an EF-hand domain in the interval 49-84 (HDPATVDEVLRLLDEDHTGTVEFKEFLVLVFKVAQA). Asp-62, Asp-64, Thr-66, Thr-68, and Glu-73 together coordinate Ca(2+). 2 disordered regions span residues 96 to 439 (ACGS…TVVG) and 460 to 481 (LHTS…KRGI). The segment covering 99 to 110 (SQESGSLHSGAS) has biased composition (polar residues). Positions 137-151 (HRQSQQGSRGQNRPG) are enriched in low complexity. A compositionally biased stretch (polar residues) spans 152–194 (VQTQGQATGSAWVSSYDRQAESQSQERISPQIQLSGQTEQTQK). The span at 196–222 (GEGKRNQTTEMRPERQPQTREQDRAHQ) shows a compositional bias: basic and acidic residues. Low complexity predominate over residues 226-242 (TVTGSGTQTQAGATQTV). 2 stretches are compositionally biased toward polar residues: residues 243–282 (EQDS…SQAV) and 290–303 (QAGT…QTVE). Positions 307-324 (SHQTGSTSTQTQESTNGQ) are enriched in low complexity. Residues 334–355 (GRSQTSQAVTGGHTQIQAGSHT) show a composition bias toward polar residues. The segment covering 374–385 (QGQTQTQPGSGQ) has biased composition (low complexity). Composition is skewed to polar residues over residues 403–420 (QAQT…WSST) and 460–473 (LHTS…QDAA).

It belongs to the S100-fused protein family. In terms of assembly, homodimer. As to expression, expressed in the basal skin layer (at protein level). Squamous epithelia cell-specific. Expressed in the esophagus (periphery of the cells of the granular and the upper spinous layers), foreskin (granular and lower cornified cells), scalp skin (granular layer), inner root sheath of the hair follicle and in primary keratinocytes (at protein level). Expressed in the squamous epithelium of the cervix, esophagus, foreskin and larynx. Expressed in the fetal bladder and scalp skin. Expressed at very low levels in the lung, kidney, uterus, skeletal muscle, heart and fetal brain. Undetectable or barely detectable in esophageal and oral squamous cell carcinoma compared with the matched adjacent normal esophageal mucosa. Undetectable or barely detectable in larynx and esophagus from patients with pH-documented laryngopharyngeal reflux (LPR).

It localises to the cytoplasm. Promotes cell proliferation, G1/S cell cycle progression and induces expression of the cell cycle regulator CCND1. Regulates proliferation induced by pro-inflammatory cytokine response via activation of NFKB1 and PI3K/AKT signaling pathways. The chain is Cornulin (CRNN) from Homo sapiens (Human).